Reading from the N-terminus, the 1077-residue chain is Teashirt homolog 1-B (1077 aa).

Disordered regions lie at residues 1-110 (MPRR…NASY) and 142-179 (NEKA…SCTN). Residues 26-36 (TEEDNLEDDGL) show a composition bias toward acidic residues. Polar residues predominate over residues 56–69 (TQSYQNSPISSATN). Over residues 160-179 (SGPTSDPGTPTTITSSSCTN) the composition is skewed to low complexity. A C2H2-type 1 zinc finger spans residues 248–272 (FRCKDCSAAYDTLVELTVHMNETGH). Positions 274 to 286 (RDDNRDREAERTK) are enriched in basic and acidic residues. Positions 274 to 300 (RDDNRDREAERTKRWSKPRKRSLMEME) are disordered. The C2H2-type 2 zinc finger occupies 309–333 (LKCMYCGHSFESLQDLSVHMIKTKH). Positions 362–394 (ALPDSPEQAGISPGASVSESAKDPKAANPYVTP) are disordered. The C2H2-type 3 zinc-finger motif lies at 418 to 442 (LKCMECGSSHDTLQQLTAHMMVTGH). Disordered stretches follow at residues 473–530 (PPTT…KIEP) and 849–873 (GRLT…SSFE). The segment covering 497 to 529 (HSEEKKDPEKEKVNIGEVEKKIKEENEDPEKIE) has biased composition (basic and acidic residues). A compositionally biased stretch (polar residues) spans 853–862 (PKSSTPSTVS). Residues 885–955 (RKGRQSNWNP…NVKYQLRRTG (71 aa)) constitute a DNA-binding region (homeobox). 2 consecutive C2H2-type zinc fingers follow at residues 970 to 992 (FFCN…LETH) and 1037 to 1060 (FQCK…SKTH).

Belongs to the teashirt C2H2-type zinc-finger protein family.

Its subcellular location is the nucleus. Functionally, probable transcriptional regulator involved in developmental processes. May act as a transcriptional repressor (Potential). Involved in two major neuronal regionalization processes: primary anteroposterior (AP) axis patterning of the CNS and segmentation of the cranial neuronal crest (CNS) development. This is Teashirt homolog 1-B (tshz1-b) from Xenopus laevis (African clawed frog).